The following is a 119-amino-acid chain: Immunoglobulin lambda variable 4-69 (119 aa).

A signal peptide spans Met1 to Ser20. Residues Gln21 to Ser45 form a framework-1 region. Residues Gln21–Ile119 enclose the Ig-like domain. Cys42 and Cys112 are disulfide-bonded. The complementarity-determining-1 stretch occupies residues Ser46–Ala52. A framework-2 region spans residues Ile53 to Lys69. Positions Leu70–His76 are complementarity-determining-2. The interval Asp73–Gly92 is disordered. Residues Ser77 to Cys112 are framework-3. The interval Gln113–Ile119 is complementarity-determining-3.

In terms of assembly, immunoglobulins are composed of two identical heavy chains and two identical light chains; disulfide-linked.

Its subcellular location is the secreted. The protein localises to the cell membrane. Functionally, v region of the variable domain of immunoglobulin light chains that participates in the antigen recognition. Immunoglobulins, also known as antibodies, are membrane-bound or secreted glycoproteins produced by B lymphocytes. In the recognition phase of humoral immunity, the membrane-bound immunoglobulins serve as receptors which, upon binding of a specific antigen, trigger the clonal expansion and differentiation of B lymphocytes into immunoglobulins-secreting plasma cells. Secreted immunoglobulins mediate the effector phase of humoral immunity, which results in the elimination of bound antigens. The antigen binding site is formed by the variable domain of one heavy chain, together with that of its associated light chain. Thus, each immunoglobulin has two antigen binding sites with remarkable affinity for a particular antigen. The variable domains are assembled by a process called V-(D)-J rearrangement and can then be subjected to somatic hypermutations which, after exposure to antigen and selection, allow affinity maturation for a particular antigen. This Homo sapiens (Human) protein is Immunoglobulin lambda variable 4-69.